Consider the following 717-residue polypeptide: Fatty acid oxidation complex subunit alpha (717 aa).

The segment at 1-189 (MIYQSPTIEV…KVGAIDAVVA (189 aa)) is enoyl-CoA hydratase/isomerase. A substrate-binding site is contributed by Asp296. Residues 311-717 (KKVNSAAVLG…ANNGSYYQQA (407 aa)) are 3-hydroxyacyl-CoA dehydrogenase. Residues Met324, Asp343, 400–402 (VVE), Lys407, and Ser429 each bind NAD(+). The active-site For 3-hydroxyacyl-CoA dehydrogenase activity is His450. Residue Asn453 coordinates NAD(+). Positions 500 and 660 each coordinate substrate.

The protein in the N-terminal section; belongs to the enoyl-CoA hydratase/isomerase family. In the C-terminal section; belongs to the 3-hydroxyacyl-CoA dehydrogenase family. Heterotetramer of two alpha chains (FadB) and two beta chains (FadA).

The enzyme catalyses a (3S)-3-hydroxyacyl-CoA + NAD(+) = a 3-oxoacyl-CoA + NADH + H(+). The catalysed reaction is a (3S)-3-hydroxyacyl-CoA = a (2E)-enoyl-CoA + H2O. It catalyses the reaction a 4-saturated-(3S)-3-hydroxyacyl-CoA = a (3E)-enoyl-CoA + H2O. It carries out the reaction (3S)-3-hydroxybutanoyl-CoA = (3R)-3-hydroxybutanoyl-CoA. The enzyme catalyses a (3Z)-enoyl-CoA = a 4-saturated (2E)-enoyl-CoA. The catalysed reaction is a (3E)-enoyl-CoA = a 4-saturated (2E)-enoyl-CoA. The protein operates within lipid metabolism; fatty acid beta-oxidation. Functionally, involved in the aerobic and anaerobic degradation of long-chain fatty acids via beta-oxidation cycle. Catalyzes the formation of 3-oxoacyl-CoA from enoyl-CoA via L-3-hydroxyacyl-CoA. It can also use D-3-hydroxyacyl-CoA and cis-3-enoyl-CoA as substrate. This Shewanella pealeana (strain ATCC 700345 / ANG-SQ1) protein is Fatty acid oxidation complex subunit alpha.